The chain runs to 958 residues: N-terminal acetyltransferase B complex subunit NAA25 homolog (958 aa).

3 TPR repeats span residues 7 to 42, 78 to 111, and 320 to 353; these read AVLE…HPNT, ELTL…DPSE, and FFAY…MLEY.

Belongs to the MDM20/NAA25 family. As to quaternary structure, component of the N-terminal acetyltransferase B (NatB) complex. Interacts with acer-1. Expressed in germline and somatic cells.

It is found in the cytoplasm. It localises to the nucleus. Its subcellular location is the chromosome. Its function is as follows. Non-catalytic subunit of the NatB complex which catalyzes acetylation of the N-terminal methionine residues of proteins beginning with Met-Asp or Met-Glu. Required for chromosome organization and arrangement; specifically for assembly of the central region components of the synaptonemal complex onto chromosomes during meiosis and for DNA double stranded break formation and repair. Acts downstream of xnd-1 to regulate levels of histone acetylation in germ and somatic cell nuclei by controlling acetyl-CoA production through antagonizing the acetyl-CoA hydrolase activity of acer-1. This Caenorhabditis elegans protein is N-terminal acetyltransferase B complex subunit NAA25 homolog.